Consider the following 434-residue polypeptide: MKTRTQQIEELQKEWTQPRWEGITRPYSAEEVVKLRGSVNPECTLAQLGAAKMWRLLHGEAKKGYINSLGALTGGQALQQAKAGIEAIYLSGWQVAADANLASSMYPDQSLYPANSVPAVVDRINNTFRRADQIQWASGIEPNDPRYVDYFLPIVADAEAGFGGVLNAFELMKSMIEAGAAAVHFEDQLASVKKCGHMGGKVLVPTQEAIQKLVAARLAADVMGVPTLVIARTDADAADLITSDCDPYDSGFITGERTSEGFYRTHAGIEQAISRGLAYAPYADLVWCETSTPDLELARRFADAIHAKYPGKLLAYNCSPSFNWQKNLDDKTIASFQQQLSDMGYKYQFITLAGIHSMWFNMFDLAHAYAQGEGMKHYVEKVQQPEFAAAKDGYTFVSHQQEVGTGYFDKVTTIIQGGASSVTALTGSTEEAQF.

Residue 91–93 (SGW) coordinates substrate. A Mg(2+)-binding site is contributed by Asp-157. Residue Cys-195 is the Proton acceptor of the active site. Residues 196–197 (GH), Arg-232, 317–321 (NCSPS), and Thr-351 each bind substrate.

This sequence belongs to the isocitrate lyase/PEP mutase superfamily. Isocitrate lyase family. As to quaternary structure, homotetramer. Mg(2+) is required as a cofactor.

It carries out the reaction D-threo-isocitrate = glyoxylate + succinate. The protein operates within carbohydrate metabolism; glyoxylate cycle; (S)-malate from isocitrate: step 1/2. In terms of biological role, involved in the metabolic adaptation in response to environmental changes. Catalyzes the reversible formation of succinate and glyoxylate from isocitrate, a key step of the glyoxylate cycle, which operates as an anaplerotic route for replenishing the tricarboxylic acid cycle during growth on fatty acid substrates. The protein is Isocitrate lyase (aceA) of Salmonella typhimurium (strain LT2 / SGSC1412 / ATCC 700720).